A 260-amino-acid chain; its full sequence is Transforming acid coiled-coil-containing protein 1 (260 aa).

A disordered region spans residues 1–43 (MSLNTTFTKEDGTEVVIPFNGSQNGHPENEEPEVEEAAEPSSS). Residues 108-249 (ASSEELEKAL…CDQLLNDVDV (142 aa)) are a coiled coil.

This sequence belongs to the TACC family. Interacts with zyg-9 to form a heterodimer. Interacts with zyg-8 to form a heterodimer. Interacts with efa-6 (via N-terminus). Expressed in touch neurons.

It is found in the cytoplasm. The protein localises to the cytoskeleton. It localises to the spindle pole. Its subcellular location is the microtubule organizing center. The protein resides in the centrosome. It is found in the chromosome. The protein localises to the centromere. It localises to the kinetochore. Its subcellular location is the cell projection. The protein resides in the axon. It is found in the perikaryon. Its function is as follows. Involved in microtubule formation, polymerization and assembly, regulating microtubule nucleation and length. Plays a role in pronuclear migration and mitotic and meiotic spindle elongation during early embryogenesis. In complex with zyg-9, functions during the early stages of embryonic development to regulate microtubule assembly throughout the cell cycle. Specifically, the complex is required for the formation and growth of astral microtubules and spindle microtubules during mitotic spindle assembly. At anaphase, the complex is required for mitotic spindle positioning in one-cell stage embryos. The complex acts in a partially redundant manner with the tac-1/zyg-8 complex to regulate microtubule assembly and processes during interphase, mitosis and meiosis in embryos. Plays a role in injury-induced axonal regrowth, regeneration and microtubule stability in PLM neurons and this may be downstream of efa-6. The sequence is that of Transforming acid coiled-coil-containing protein 1 from Caenorhabditis elegans.